The chain runs to 276 residues: uncharacterized protein (276 aa).

An AB hydrolase-1 domain is found at 20–137 (PVLIFIPGAN…PPINTFLPDS (118 aa)). The disordered stretch occupies residues 57 to 76 (GESELTEPLPDSASNPDSDY).

It belongs to the AB hydrolase superfamily.

This is an uncharacterized protein from Staphylococcus aureus (strain COL).